We begin with the raw amino-acid sequence, 253 residues long: Demethylmenaquinone methyltransferase (253 aa).

S-adenosyl-L-methionine is bound by residues Thr62, Asp80, 102 to 103 (DA), and Ser119.

This sequence belongs to the class I-like SAM-binding methyltransferase superfamily. MenG/UbiE family.

It carries out the reaction a 2-demethylmenaquinol + S-adenosyl-L-methionine = a menaquinol + S-adenosyl-L-homocysteine + H(+). It functions in the pathway quinol/quinone metabolism; menaquinone biosynthesis; menaquinol from 1,4-dihydroxy-2-naphthoate: step 2/2. Methyltransferase required for the conversion of demethylmenaquinol (DMKH2) to menaquinol (MKH2). The protein is Demethylmenaquinone methyltransferase of Paenarthrobacter aurescens (strain TC1).